The following is a 281-amino-acid chain: Glyoxalase 1 (281 aa).

VOC domains are found at residues R4 to A127 and K132 to D251.

Belongs to the glyoxalase I family.

In terms of biological role, thought to act as a glyoxalase. May remove methylglyoxal from mitochondrial proteins. Has roles in reducing oxidative stress and increasing lifespan. The sequence is that of Glyoxalase 1 from Caenorhabditis briggsae.